The sequence spans 361 residues: Epoxyqueuosine reductase (361 aa).

Asp-147 functions as the Proton donor in the catalytic mechanism. The 4Fe-4S ferredoxin-type domain occupies 193-222; that stretch reads VDPAMDSEHCGRCSACLDICPTAAFVGPYR. [4Fe-4S] cluster contacts are provided by Cys-202, Cys-205, Cys-208, Cys-212, Cys-228, Cys-255, Cys-258, and Cys-262.

The protein belongs to the QueG family. Monomer. Cob(II)alamin is required as a cofactor. Requires [4Fe-4S] cluster as cofactor.

The protein resides in the cytoplasm. It catalyses the reaction epoxyqueuosine(34) in tRNA + AH2 = queuosine(34) in tRNA + A + H2O. It functions in the pathway tRNA modification; tRNA-queuosine biosynthesis. Catalyzes the conversion of epoxyqueuosine (oQ) to queuosine (Q), which is a hypermodified base found in the wobble positions of tRNA(Asp), tRNA(Asn), tRNA(His) and tRNA(Tyr). The polypeptide is Epoxyqueuosine reductase (Pseudomonas aeruginosa (strain ATCC 15692 / DSM 22644 / CIP 104116 / JCM 14847 / LMG 12228 / 1C / PRS 101 / PAO1)).